Reading from the N-terminus, the 79-residue chain is Short neurotoxin 8 (79 aa).

An N-terminal signal peptide occupies residues 1–21 (MKTLLLTLVMVTIMCLDLGYT). Intrachain disulfides connect Cys-24–Cys-41, Cys-34–Cys-59, Cys-63–Cys-71, and Cys-72–Cys-77.

Belongs to the three-finger toxin family. Short-chain subfamily. Type III alpha-neurotoxin sub-subfamily. Expressed by the venom gland.

It localises to the secreted. Its function is as follows. Binds with high affinity to muscle nicotinic acetylcholine receptor (nAChR) and hinders acetylcholine binding to the receptor, thereby impairing neuromuscular transmission. Causes muscle paralysis, spasms and increased respiration. The polypeptide is Short neurotoxin 8 (Pseudonaja textilis (Eastern brown snake)).